We begin with the raw amino-acid sequence, 347 residues long: Gentisate 1,2 dioxygenase 1 (347 aa).

A Cupin type-2 domain is found at 96–163 (LQLILPGEVA…DSDKPMIWMD (68 aa)).

The protein belongs to the gentisate 1,2-dioxygenase family. Homotetramer. It depends on Fe(2+) as a cofactor.

It carries out the reaction 2,5-dihydroxybenzoate + O2 = 3-maleylpyruvate + H(+). Its activity is regulated as follows. Completely inhibited by the presence of 5 mM Cu(2+). Partially inhibited with 5 mM Mn(2+), Zn(2+) or EDTA. Involved in the degradation of gentisate. Catalyzes the conversion of gentisate (2,5-dihydroxybenzoate) to maleylpyruvate. Exhibits broad substrate specificities towards alkyl and halogenated gentisates. In Aquipseudomonas alcaligenes (Pseudomonas alcaligenes), this protein is Gentisate 1,2 dioxygenase 1.